A 221-amino-acid chain; its full sequence is Uracil-DNA glycosylase (221 aa).

Catalysis depends on aspartate 63, which acts as the Proton acceptor.

It belongs to the uracil-DNA glycosylase (UDG) superfamily. UNG family.

It localises to the cytoplasm. It catalyses the reaction Hydrolyzes single-stranded DNA or mismatched double-stranded DNA and polynucleotides, releasing free uracil.. In terms of biological role, excises uracil residues from the DNA which can arise as a result of misincorporation of dUMP residues by DNA polymerase or due to deamination of cytosine. In Blochmanniella floridana, this protein is Uracil-DNA glycosylase.